We begin with the raw amino-acid sequence, 243 residues long: MDGFDVSQAPREYQAVKPLADLFVLGMGLGWVINYVGMVYTSFKERTYGMAIMPLCCNIAWEIVYCVFHPSKSRVELGVFAMGLLINFGVMYAAIIFSSREWSHAPLVERNLPWIFCIGVLGFLTGHLALAAEIGPSLAYSWGAVVCQLLLSVGGLCQLLCRGSTRGASYTLWLSRFLGSCCTVGFASLRWMYWPQSFAWLNSPLVLWSLAVFLMVDGSYGVCFWYVEQYEKSVLMGRATKAM.

7 helical membrane-spanning segments follow: residues 19-39, 48-68, 77-97, 112-132, 134-154, 172-194, and 205-225; these read LADL…VGMV, YGMA…YCVF, LGVF…AIIF, LPWI…ALAA, IGPS…LSVG, LWLS…WMYW, and LVLW…VCFW.

Belongs to the paxB family.

Its subcellular location is the membrane. Its pathway is secondary metabolite biosynthesis. Its function is as follows. Terpene cyclase; part of the gene cluster that mediates the biosynthesis of the indole diterpenes janthitremanes such as shearinine K or shearinine A. The geranylgeranyl diphosphate (GGPP) synthase janG catalyzes the first step in janthitremane biosynthesis via conversion of farnesyl pyrophosphate and isopentyl pyrophosphate into geranylgeranyl pyrophosphate (GGPP). Condensation of indole-3-glycerol phosphate with GGPP by the prenyl transferase janC then forms 3-geranylgeranylindole (3-GGI). Epoxidation by the FAD-dependent monooxygenase janM leads to a epoxidized-GGI that is substrate of the terpene cyclase janB for cyclization to yield paspaline. Paspaline is subsequently converted to 13-desoxypaspaline by the cytochrome P450 monooxygenase janP, via beta-PC-M6 in a series of alpha-face oxidations. The cytochrome P450 monooxygenase janQ is proposed to carry out sequential beta-face oxidation steps at C-7 and C-13 of 13-desoxypaspaline to form paspalicine and paspalinine respectively. The indole diterpene prenyltransferase janD may then convert paspalinine into shearinine K which is substrate of janO and/or additional enzymes for oxidation and cyclization to generate shearinine A. In Penicillium janthinellum (Penicillium vitale), this protein is Terpene cyclase janB.